The primary structure comprises 907 residues: Phosphoenolpyruvate carboxylase (907 aa).

Residues His138 and Lys570 contribute to the active site.

Belongs to the PEPCase type 1 family. Mg(2+) serves as cofactor.

The catalysed reaction is oxaloacetate + phosphate = phosphoenolpyruvate + hydrogencarbonate. Forms oxaloacetate, a four-carbon dicarboxylic acid source for the tricarboxylic acid cycle. The polypeptide is Phosphoenolpyruvate carboxylase (Streptococcus mutans serotype c (strain ATCC 700610 / UA159)).